A 295-amino-acid polypeptide reads, in one-letter code: Tyrosine recombinase XerC (295 aa).

A Core-binding (CB) domain is found at 1–84 (MTLEEQFLSY…SLKSFYRFLT (84 aa)). The region spanning 105 to 289 (KLPEFFYQDE…SMQHLTVEYR (185 aa)) is the Tyr recombinase domain. Catalysis depends on residues arginine 145, lysine 169, histidine 241, arginine 244, and histidine 267. Residue tyrosine 276 is the O-(3'-phospho-DNA)-tyrosine intermediate of the active site.

Belongs to the 'phage' integrase family. XerC subfamily. As to quaternary structure, forms a cyclic heterotetrameric complex composed of two molecules of XerC and two molecules of XerD.

It localises to the cytoplasm. Functionally, site-specific tyrosine recombinase, which acts by catalyzing the cutting and rejoining of the recombining DNA molecules. The XerC-XerD complex is essential to convert dimers of the bacterial chromosome into monomers to permit their segregation at cell division. It also contributes to the segregational stability of plasmids. The protein is Tyrosine recombinase XerC of Lactobacillus delbrueckii subsp. bulgaricus (strain ATCC 11842 / DSM 20081 / BCRC 10696 / JCM 1002 / NBRC 13953 / NCIMB 11778 / NCTC 12712 / WDCM 00102 / Lb 14).